A 277-amino-acid polypeptide reads, in one-letter code: Shikimate dehydrogenase (NADP(+)) (277 aa).

Shikimate contacts are provided by residues 19–21 (SKS) and Thr-66. Lys-70 functions as the Proton acceptor in the catalytic mechanism. Asp-82 is an NADP(+) binding site. 2 residues coordinate shikimate: Asn-91 and Asp-107. NADP(+) is bound by residues 133–137 (GAGGA), 157–162 (NRTRAR), and Leu-222. Tyr-224 lines the shikimate pocket. Gly-245 lines the NADP(+) pocket.

Belongs to the shikimate dehydrogenase family. Homodimer.

The enzyme catalyses shikimate + NADP(+) = 3-dehydroshikimate + NADPH + H(+). It participates in metabolic intermediate biosynthesis; chorismate biosynthesis; chorismate from D-erythrose 4-phosphate and phosphoenolpyruvate: step 4/7. Its function is as follows. Involved in the biosynthesis of the chorismate, which leads to the biosynthesis of aromatic amino acids. Catalyzes the reversible NADPH linked reduction of 3-dehydroshikimate (DHSA) to yield shikimate (SA). This chain is Shikimate dehydrogenase (NADP(+)), found in Roseobacter denitrificans (strain ATCC 33942 / OCh 114) (Erythrobacter sp. (strain OCh 114)).